A 662-amino-acid chain; its full sequence is MGGFKLVSNFKPTGDQPQAIEKLVEGVRRGYRYQTLLGVTGSGKTFTMANIIARLNRPTLVIAHNKTLAAQLYSEFKEFFPENAVEYFVSYYDYYQPEAYVPETDTYIEKDASINEEIDKLRHSATAALFERRDVIIVASVSCIYGLGDPIDYENLMLSLRPGMVKDRDEIIRKLVEIQYERNDINFTRGKFRVRGDVIEVFPASFSNKAIRIELFGDEIDRIAEIDVLTGEVLGYRKHVAIFPASHYATSRDKLERAIKSIREELEERYKELKEMGKIVEAERLWQRTNYDLEMLQEMGYCKGIENYSRHISGRPPGSPPYTLLDYFPEDFLIFIDESHVTIPQLRGMYNGDRSRKEALVEYGFRLPSAYDNRPLTFEEFEQRVNQVIFVSATPGPYEMEHSEQVVEQLIRPTGLVDPEVIVRPVKGQVDDLIAEIRKTVAKGYRVLVTTLTKKMAEDLSDYLKEMGIRVRYLHSDIETIERVEIIRDLRLGKFDVLIGINLLREGLDIPEVALVAILDADKEGFLRSETSLIQTIGRAARNAEGRVIMYADTITNSMRRAIDETNRRRKIQMEYNEKHGIVPKTVVKGVRDVIQATQVAEKEEKYEKTANFYDPDVIKSTIEQLEKEMRQAAIELQFEKAAKLRDMILELRKQLEEVSLR.

The region spanning 25–412 is the Helicase ATP-binding domain; sequence EGVRRGYRYQ…SEQVVEQLIR (388 aa). 38–45 is a binding site for ATP; it reads GVTGSGKT. Positions 91–114 match the Beta-hairpin motif; that stretch reads YYDYYQPEAYVPETDTYIEKDASI. Positions 429-595 constitute a Helicase C-terminal domain; it reads QVDDLIAEIR…TVVKGVRDVI (167 aa). A UVR domain is found at 620-655; it reads KSTIEQLEKEMRQAAIELQFEKAAKLRDMILELRKQ.

This sequence belongs to the UvrB family. As to quaternary structure, forms a heterotetramer with UvrA during the search for lesions. Interacts with UvrC in an incision complex.

The protein resides in the cytoplasm. Functionally, the UvrABC repair system catalyzes the recognition and processing of DNA lesions. A damage recognition complex composed of 2 UvrA and 2 UvrB subunits scans DNA for abnormalities. Upon binding of the UvrA(2)B(2) complex to a putative damaged site, the DNA wraps around one UvrB monomer. DNA wrap is dependent on ATP binding by UvrB and probably causes local melting of the DNA helix, facilitating insertion of UvrB beta-hairpin between the DNA strands. Then UvrB probes one DNA strand for the presence of a lesion. If a lesion is found the UvrA subunits dissociate and the UvrB-DNA preincision complex is formed. This complex is subsequently bound by UvrC and the second UvrB is released. If no lesion is found, the DNA wraps around the other UvrB subunit that will check the other stand for damage. This Caldanaerobacter subterraneus subsp. tengcongensis (strain DSM 15242 / JCM 11007 / NBRC 100824 / MB4) (Thermoanaerobacter tengcongensis) protein is UvrABC system protein B.